We begin with the raw amino-acid sequence, 100 residues long: Nucleoid-associated protein HPSH_00175 (100 aa).

Belongs to the YbaB/EbfC family. Homodimer.

The protein localises to the cytoplasm. The protein resides in the nucleoid. In terms of biological role, binds to DNA and alters its conformation. May be involved in regulation of gene expression, nucleoid organization and DNA protection. The polypeptide is Nucleoid-associated protein HPSH_00175 (Helicobacter pylori (strain Shi470)).